The sequence spans 263 residues: Phosphatidylglycerol--prolipoprotein diacylglyceryl transferase (263 aa).

The next 4 helical transmembrane spans lie at 15–35, 52–72, 83–103, and 112–132; these read ISIH…VYLA, FILL…VIFQ, IFAI…GAAV, and AIAV…AQSI. R134 is a binding site for a 1,2-diacyl-sn-glycero-3-phospho-(1'-sn-glycerol). Helical transmembrane passes span 170-190, 200-220, and 230-250; these read VPTF…ILGL, GDVT…IEGM, and LRVS…LLYF.

It belongs to the Lgt family.

It is found in the cell membrane. The catalysed reaction is L-cysteinyl-[prolipoprotein] + a 1,2-diacyl-sn-glycero-3-phospho-(1'-sn-glycerol) = an S-1,2-diacyl-sn-glyceryl-L-cysteinyl-[prolipoprotein] + sn-glycerol 1-phosphate + H(+). Its pathway is protein modification; lipoprotein biosynthesis (diacylglyceryl transfer). Catalyzes the transfer of the diacylglyceryl group from phosphatidylglycerol to the sulfhydryl group of the N-terminal cysteine of a prolipoprotein, the first step in the formation of mature lipoproteins. In Streptococcus thermophilus (strain ATCC BAA-250 / LMG 18311), this protein is Phosphatidylglycerol--prolipoprotein diacylglyceryl transferase.